The sequence spans 266 residues: Regulatory protein RecX (266 aa).

Belongs to the RecX family.

It is found in the cytoplasm. Its function is as follows. Modulates RecA activity. The polypeptide is Regulatory protein RecX (Leuconostoc citreum (strain KM20)).